Reading from the N-terminus, the 241-residue chain is Microneme antigen (241 aa).

The N-terminal stretch at 1–34 (MRLPIRFPKYVLYGMASAVWSILFLHILVGDTMS) is a signal peptide. Positions 35–103 (AADALSWSGG…ATGRGPSFVH (69 aa)) are excised as a propeptide. Residues 61-83 (HEMGKELEQQHGAEEQQMQRDTK) are compositionally biased toward basic and acidic residues. A disordered region spans residues 61–92 (HEMGKELEQQHGAEEQQMQRDTKPAAFSNPPH). 2 PAN domains span residues 112–181 (CFPH…PRSC) and 185–241 (CTDN…FNKS). Intrachain disulfides connect Cys112–Cys181, Cys137–Cys159, Cys141–Cys147, Cys185–Cys189, Cys210–Cys230, and Cys214–Cys220. Ser121 is a binding site for a carbohydrate. Residues Lys162, Tyr169, and Asp174 each coordinate a carbohydrate.

The protein belongs to the microneme antigen family. As to quaternary structure, homodimer or heterodimer of major microneme antigen and microneme antigen. In terms of processing, contains six disulfide bonds.

It localises to the cytoplasmic vesicle. The protein localises to the secretory vesicle. Its subcellular location is the microneme. Functionally, galactose-binding lectin. Plays a role in adhesion to the host cell. Has a potential role in invasion of host cells. The chain is Microneme antigen from Sarcocystis muris.